A 149-amino-acid polypeptide reads, in one-letter code: Transcriptional repressor NrdR (149 aa).

A zinc finger spans residues 3–34 (CPFCSATDTKVIDSRLVAEGHQVRRRRECTEC). In terms of domain architecture, ATP-cone spans 49–139 (PRVIKRDGSR…VYRAFEDVSE (91 aa)).

This sequence belongs to the NrdR family. The cofactor is Zn(2+).

In terms of biological role, negatively regulates transcription of bacterial ribonucleotide reductase nrd genes and operons by binding to NrdR-boxes. This Shewanella putrefaciens (strain CN-32 / ATCC BAA-453) protein is Transcriptional repressor NrdR.